Consider the following 612-residue polypeptide: Chaperone protein DnaK (612 aa).

Residue threonine 174 is modified to Phosphothreonine; by autocatalysis. A disordered region spans residues 579–612; the sequence is GSAGTGAGSQAGSAAGSGDGQSMDAEFKVKDEDK. Over residues 581–597 the composition is skewed to gly residues; the sequence is AGTGAGSQAGSAAGSGD. Residues 603–612 show a composition bias toward basic and acidic residues; the sequence is AEFKVKDEDK.

This sequence belongs to the heat shock protein 70 family.

Acts as a chaperone. This is Chaperone protein DnaK from Symbiobacterium thermophilum (strain DSM 24528 / JCM 14929 / IAM 14863 / T).